We begin with the raw amino-acid sequence, 680 residues long: Chondroitin proteoglycan 4 (680 aa).

The first 18 residues, 1-18, serve as a signal peptide directing secretion; that stretch reads MLRVNLLILLCFVPFSLN. N42, N59, N72, N167, N205, N458, N472, N486, N498, N526, N527, N556, and N604 each carry an N-linked (GlcNAc...) asparagine glycan. The tract at residues 460-680 is disordered; it reads TKKAETTKKS…PLTTTLHELY (221 aa). Residues 484–500 are compositionally biased toward low complexity; the sequence is AANTTAETTKTTSANIT. Polar residues predominate over residues 520 to 530; it reads SLDTSGNNSTV. 2 stretches are compositionally biased toward low complexity: residues 633–647 and 654–669; these read GEAS…SGEV and SGYS…SSGE. 2 O-linked (Xyl...) (chondroitin sulfate) serine glycosylation sites follow: S640 and S644. A glycan (N-linked (GlcNAc...) asparagine) is linked at N664.

This Caenorhabditis briggsae protein is Chondroitin proteoglycan 4 (cpg-4).